A 484-amino-acid chain; its full sequence is Putative beta-barrel assembly-enhancing protease (484 aa).

The N-terminal stretch at 1–23 (MKFFPTRTLLCLCIAAPCLPAIA) is a signal peptide. A Zn(2+)-binding site is contributed by histidine 133. Glutamate 134 is a catalytic residue. Zn(2+) contacts are provided by histidine 137 and glutamate 198. Aspartate 202 (proton donor) is an active-site residue. TPR repeat units follow at residues 307-340 (PSIQYGKALVYLDLKQFDKAEPLLTQLVKEQPDN), 341-374 (HFYLDAISDLYIELKQADKAQSLLEKALKQTPNN), 376-408 (VLTINYANVLLKQDKFTDAIRILQRYTHDNPND), and 426-459 (AEDLAARGEIMALQANWNKAIQFYTQASQLVELG).

It belongs to the peptidase M48 family. BepA subfamily. It depends on Zn(2+) as a cofactor.

It is found in the periplasm. In terms of biological role, functions both as a chaperone and a metalloprotease. Maintains the integrity of the outer membrane by promoting either the assembly or the elimination of outer membrane proteins, depending on their folding state. The polypeptide is Putative beta-barrel assembly-enhancing protease (Vibrio cholerae serotype O1 (strain ATCC 39315 / El Tor Inaba N16961)).